Reading from the N-terminus, the 308-residue chain is uncharacterized protein (308 aa).

2 stretches are compositionally biased toward polar residues: residues 138–148 (WSFTKHGSNTP) and 205–229 (STSHLNHPSTSNSPDPLYSASQPPS). Disordered regions lie at residues 138–157 (WSFTKHGSNTPSDSSSPLCN) and 205–235 (STSHLNHPSTSNSPDPLYSASQPPSIKTDAS).

The protein localises to the cytoplasm. This is an uncharacterized protein from Schizosaccharomyces pombe (strain 972 / ATCC 24843) (Fission yeast).